A 278-amino-acid polypeptide reads, in one-letter code: Large ribosomal subunit protein uL2 (278 aa).

The segment at 223-278 (GVAMNPIDHPHGGGEGRTSGGRHPVTPWGFPTKGKKTRSNKRTDTFIVSSRHNRKK) is disordered.

The protein belongs to the universal ribosomal protein uL2 family. In terms of assembly, part of the 50S ribosomal subunit. Forms a bridge to the 30S subunit in the 70S ribosome.

In terms of biological role, one of the primary rRNA binding proteins. Required for association of the 30S and 50S subunits to form the 70S ribosome, for tRNA binding and peptide bond formation. It has been suggested to have peptidyltransferase activity; this is somewhat controversial. Makes several contacts with the 16S rRNA in the 70S ribosome. The sequence is that of Large ribosomal subunit protein uL2 from Methylobacterium sp. (strain 4-46).